The primary structure comprises 402 residues: Flavohemoprotein (402 aa).

The Globin domain maps to 1–136 (MLSEKTIEIV…IADAFISIEA (136 aa)). Heme b is bound at residue histidine 85. Residues tyrosine 95 and glutamate 135 each act as charge relay system in the active site. Residues 147 to 402 (GGWKDFRNFV…EFFGPAASLQ (256 aa)) form a reductase region. Residues 150 to 260 (KDFRNFVVVK…SAPAGDFVLN (111 aa)) enclose the FAD-binding FR-type domain. FAD-binding positions include tyrosine 188 and 204 to 207 (RQYS). 273 to 278 (GVGITP) lines the NADP(+) pocket. 394-397 (FFGP) contacts FAD.

The protein belongs to the globin family. Two-domain flavohemoproteins subfamily. In the C-terminal section; belongs to the flavoprotein pyridine nucleotide cytochrome reductase family. The cofactor is heme b. FAD serves as cofactor.

The catalysed reaction is 2 nitric oxide + NADPH + 2 O2 = 2 nitrate + NADP(+) + H(+). The enzyme catalyses 2 nitric oxide + NADH + 2 O2 = 2 nitrate + NAD(+) + H(+). Functionally, is involved in NO detoxification in an aerobic process, termed nitric oxide dioxygenase (NOD) reaction that utilizes O(2) and NAD(P)H to convert NO to nitrate, which protects the bacterium from various noxious nitrogen compounds. Therefore, plays a central role in the inducible response to nitrosative stress. In Bacillus cereus (strain ATCC 10987 / NRS 248), this protein is Flavohemoprotein.